Reading from the N-terminus, the 280-residue chain is Dolichyl-diphosphooligosaccharide--protein glycosyltransferase subunit 2 (280 aa).

An N-terminal signal peptide occupies residues 1–16; that stretch reads MKLLLVLLTIASVALA. At 17–187 the chain is on the lumenal side; that stretch reads AVDDVAVNNF…FRQPEKRPSA (171 aa). A helical membrane pass occupies residues 188–208; that stretch reads LISDLFTIICLSPLLILVVLW. The Cytoplasmic portion of the chain corresponds to 209 to 222; that stretch reads SQVGINFQNAPASP. The helical transmembrane segment at 223 to 243 threads the bilayer; that stretch reads WVPIFHVGLIGIFGIYFMFWV. Residue glutamine 244 is a topological domain, lumenal. A helical transmembrane segment spans residues 245 to 265; sequence FDMFVTLKYLAVLGFLTFVAG. Residues 266 to 280 are Cytoplasmic-facing; it reads NRVLRAISESKQKSE.

It belongs to the SWP1 family. As to quaternary structure, component of the oligosaccharyltransferase (OST) complex.

Its subcellular location is the endoplasmic reticulum membrane. Its pathway is protein modification; protein glycosylation. Its function is as follows. Subunit of the oligosaccharyl transferase (OST) complex that catalyzes the initial transfer of a defined glycan (Glc(3)Man(9)GlcNAc(2) in eukaryotes) from the lipid carrier dolichol-pyrophosphate to an asparagine residue within an Asn-X-Ser/Thr consensus motif in nascent polypeptide chains, the first step in protein N-glycosylation. N-glycosylation occurs cotranslationally and the complex associates with the Sec61 complex at the channel-forming translocon complex that mediates protein translocation across the endoplasmic reticulum (ER). All subunits are required for a maximal enzyme activity. The sequence is that of Dolichyl-diphosphooligosaccharide--protein glycosyltransferase subunit 2 from Caenorhabditis elegans.